A 400-amino-acid chain; its full sequence is Phosphoglycerate kinase (400 aa).

Residues 21 to 23 (DFN), arginine 36, 59 to 62 (HLGR), arginine 118, and arginine 151 each bind substrate. ATP is bound by residues lysine 201, glycine 293, glutamate 324, and 353–356 (GGDS).

This sequence belongs to the phosphoglycerate kinase family. Monomer.

The protein localises to the cytoplasm. The enzyme catalyses (2R)-3-phosphoglycerate + ATP = (2R)-3-phospho-glyceroyl phosphate + ADP. The protein operates within carbohydrate degradation; glycolysis; pyruvate from D-glyceraldehyde 3-phosphate: step 2/5. In Fervidobacterium nodosum (strain ATCC 35602 / DSM 5306 / Rt17-B1), this protein is Phosphoglycerate kinase.